Reading from the N-terminus, the 627-residue chain is MPIRQLSETMINQIAAGEVIERPASVVKELVENALDAGASRVEVVTAGGGLNLIRVTDDGSGIPEPELALAIARHCTSKLAEDINDIRSLGFRGEALPSIGSVSRLSIRSRTALGDSAAEIGIEGGRVLPVRPAAANRGTTVEVRDLFFATPARLKFMKGERAESSATSDVVKRIAIAFPAVRFTLAGSDRSTLELPATDDSPEGSLRRVAQVMGAEFPDNSIAIDAMREGVHLTGHVSIPSFSRANALQQYAYVNGRPVRDKLIAGAIRGAFADVLPRDRHAVTVLFLTLDPAIVDVNVHPAKADVRFRDPGLVRGLIVGAIRQALADAGIRSATTGAAGMMAAFRPGAASYNHGGPANGHRSYEAAYRASGSAGFDPARSPQRPLDMQFGDFERAGARHGGFSEPGQAAFDTGPLVSADARVGQNETTETLLGTVLGAARAQVHENYIVAQTRDSLVIVDQHAAHERLVYEALKNALHSRPVPSQMLLLPEIIDLPEEDAERLAMHSETLARFGLGIERFGPGAVAVRETPSMLGETNVQQLVRDLADEIADNDTVETLKERLDKIAATMACHGSVRSGRLLKAEEMNALLRQMEATPGSGTCNHGRPTYIELKLADIERLFGRR.

The protein belongs to the DNA mismatch repair MutL/HexB family.

In terms of biological role, this protein is involved in the repair of mismatches in DNA. It is required for dam-dependent methyl-directed DNA mismatch repair. May act as a 'molecular matchmaker', a protein that promotes the formation of a stable complex between two or more DNA-binding proteins in an ATP-dependent manner without itself being part of a final effector complex. The chain is DNA mismatch repair protein MutL from Mesorhizobium japonicum (strain LMG 29417 / CECT 9101 / MAFF 303099) (Mesorhizobium loti (strain MAFF 303099)).